The following is a 500-amino-acid chain: Probable cytosol aminopeptidase (500 aa).

2 residues coordinate Mn(2+): Lys-269 and Asp-274. The active site involves Lys-281. Mn(2+) is bound by residues Asp-292, Asp-351, and Glu-353. Arg-355 is a catalytic residue.

It belongs to the peptidase M17 family. Requires Mn(2+) as cofactor.

The protein resides in the cytoplasm. The enzyme catalyses Release of an N-terminal amino acid, Xaa-|-Yaa-, in which Xaa is preferably Leu, but may be other amino acids including Pro although not Arg or Lys, and Yaa may be Pro. Amino acid amides and methyl esters are also readily hydrolyzed, but rates on arylamides are exceedingly low.. It carries out the reaction Release of an N-terminal amino acid, preferentially leucine, but not glutamic or aspartic acids.. Functionally, presumably involved in the processing and regular turnover of intracellular proteins. Catalyzes the removal of unsubstituted N-terminal amino acids from various peptides. The sequence is that of Probable cytosol aminopeptidase from Acidithiobacillus ferrooxidans (strain ATCC 23270 / DSM 14882 / CIP 104768 / NCIMB 8455) (Ferrobacillus ferrooxidans (strain ATCC 23270)).